Here is a 183-residue protein sequence, read N- to C-terminus: Large ribosomal subunit protein bL27m (183 aa).

Residues 1 to 34 (MFLRPTSIPSAVSQIRAQLFAGPSSLASQIQVRW) constitute a mitochondrion transit peptide.

The protein belongs to the bacterial ribosomal protein bL27 family.

It localises to the mitochondrion. The protein is Large ribosomal subunit protein bL27m (RPL27) of Cryptococcus neoformans var. neoformans serotype D (strain B-3501A) (Filobasidiella neoformans).